The sequence spans 24 residues: Brevinin-1Sa (24 aa).

A disulfide bond links Cys-18 and Cys-24.

As to expression, expressed by the skin glands.

It is found in the secreted. In terms of biological role, antibacterial activity against Gram-negative bacterium E.coli. The polypeptide is Brevinin-1Sa (Lithobates sphenocephalus (Southern leopard frog)).